A 56-amino-acid polypeptide reads, in one-letter code: FAAVSVDCSEYPKPDCTLEYRPLCGSDNKTYASKCNFCNAVVESNGTLTLSHFGKC.

Residues 6-56 (VDCSEYPKPDCTLEYRPLCGSDNKTYASKCNFCNAVVESNGTLTLSHFGKC) enclose the Kazal-like domain. Cystine bridges form between cysteine 8-cysteine 38, cysteine 16-cysteine 35, and cysteine 24-cysteine 56. The N-linked (GlcNAc...) asparagine glycan is linked to asparagine 45.

It is found in the secreted. The protein is Ovomucoid of Callipepla squamata pallida (Blue scaled quail).